A 332-amino-acid chain; its full sequence is Glycerol-3-phosphate dehydrogenase [NAD(P)+] (332 aa).

NADPH-binding residues include Ser-11, Phe-12, Lys-32, and Lys-106. Residues Lys-106, Gly-137, and Ser-139 each contribute to the sn-glycerol 3-phosphate site. NADPH is bound at residue Ala-141. Sn-glycerol 3-phosphate contacts are provided by Lys-192, Asp-245, Ser-255, Arg-256, and Asn-257. Residue Lys-192 is the Proton acceptor of the active site. Arg-256 lines the NADPH pocket. The NADPH site is built by Val-280 and Glu-282.

It belongs to the NAD-dependent glycerol-3-phosphate dehydrogenase family.

The protein resides in the cytoplasm. It catalyses the reaction sn-glycerol 3-phosphate + NAD(+) = dihydroxyacetone phosphate + NADH + H(+). It carries out the reaction sn-glycerol 3-phosphate + NADP(+) = dihydroxyacetone phosphate + NADPH + H(+). Its pathway is membrane lipid metabolism; glycerophospholipid metabolism. Its function is as follows. Catalyzes the reduction of the glycolytic intermediate dihydroxyacetone phosphate (DHAP) to sn-glycerol 3-phosphate (G3P), the key precursor for phospholipid synthesis. The protein is Glycerol-3-phosphate dehydrogenase [NAD(P)+] of Staphylococcus epidermidis (strain ATCC 12228 / FDA PCI 1200).